A 77-amino-acid chain; its full sequence is TSC22 domain family protein 3 (77 aa).

The residue at position 1 (methionine 1) is an N-acetylmethionine. The interval 19 to 40 is leucine-zipper; that stretch reads LKEQIRELVEKNSQLERENTLL. Residues 41 to 77 form a disordered region; the sequence is KTLASPEQLEKFQSRLSPEEPAPETPEAPEAPGGSAV. Serine 45 carries the post-translational modification Phosphoserine. The segment covering 68 to 77 has biased composition (low complexity); it reads APEAPGGSAV.

Belongs to the TSC-22/Dip/Bun family. As to quaternary structure, can form homodimers, however it is likely to function as a monomer. Interacts with AP1 and NFKB1. Interacts with MYOD1. Interacts with HDAC1; this interaction affects HDAC1 activity on MYOG promoter and thus inhibits MYOD1 transcriptional activity.

It localises to the cytoplasm. The protein localises to the nucleus. In terms of biological role, protects T-cells from IL2 deprivation-induced apoptosis through the inhibition of FOXO3A transcriptional activity that leads to the down-regulation of the pro-apoptotic factor BCL2L11. In macrophages, plays a role in the anti-inflammatory and immunosuppressive effects of glucocorticoids and IL10. In T-cells, inhibits anti-CD3-induced NFKB1 nuclear translocation. In vitro, suppresses AP1 and NFKB1 DNA-binding activities. Inhibits myogenic differentiation and mediates anti-myogenic effects of glucocorticoids by binding and regulating MYOD1 and HDAC1 transcriptional activity resulting in reduced expression of MYOG. The protein is TSC22 domain family protein 3 (TSC22D3) of Sus scrofa (Pig).